A 170-amino-acid polypeptide reads, in one-letter code: uncharacterized protein (170 aa).

Residues 7 to 27 (LVELLIGLAIISIALNFAVPL) form a helical membrane-spanning segment.

Its subcellular location is the membrane. This is an uncharacterized protein from Haemophilus influenzae (strain ATCC 51907 / DSM 11121 / KW20 / Rd).